We begin with the raw amino-acid sequence, 386 residues long: MELSISQSPRVRFSSLAPRFLAASHHHRPSVHLAGKFISLPRDVRFTSLSTSRMRSKFVSTNYRKISIRACSQVGAAESDDPVLDRIARFQNACWRFLRPHTIRGTALGSTALVTRALIENTHLIKWSLVLKALSGLLALICGNGYIVGINQIYDIGIDKVNKPYLPIAAGDLSVQSAWLLVIFFAIAGLLVVGFNFGPFITSLYSLGLFLGTIYSVPPLRMKRFPVAAFLIIATVRGFLLNFGVYHATRAALGLPFQWSAPVAFITSFVTLFALVIAITKDLPDVEGDRKFQISTLATKLGVRNIAFLGSGLLLVNYVSAISLAFYMPQVFRGSLMIPAHVILASGLIFQTWVLEKANYTKEAISGYYRFIWNLFYAEYLLFPFL.

The transit peptide at 1–69 (MELSISQSPR…STNYRKISIR (69 aa)) directs the protein to the chloroplast. 8 helical membrane passes run 130-150 (VLKA…IVGI), 181-201 (LVIF…GPFI), 204-220 (LYSL…VPPL), 225-245 (FPVA…NFGV), 259-279 (WSAP…VIAI), 306-326 (IAFL…SLAF), 335-355 (SLMI…TWVL), and 365-385 (ISGY…LFPF).

The protein belongs to the UbiA prenyltransferase family.

It localises to the plastid. It is found in the chloroplast membrane. It carries out the reaction all-trans-nonaprenyl diphosphate + homogentisate + H(+) = 2-methyl-6-(all-trans-nonaprenyl)benzene-1,4-diol + CO2 + diphosphate. With respect to regulation, inhibited by haloxydine (3,5-dichloro-2,6-difluoro-4-haloxypyridine). Involved in the synthesis of plastoquinone-9. Can use both homogentisic acid and 2,5-dihydroxyphenylacetic acid gamma-lactone as prenyl acceptors, and solanesyl diphosphate &gt; farnesyl diphosphate &gt; geranylgeranyl diphosphate &gt;&gt; phytyl diphosphate as prenyl donors. Do not catalyze the decardoxylation of homogentisate uncoupled from prenylation. In Arabidopsis thaliana (Mouse-ear cress), this protein is Homogentisate solanesyltransferase, chloroplastic (HST).